The sequence spans 91 residues: Small ribosomal subunit protein uS19 (91 aa).

Belongs to the universal ribosomal protein uS19 family.

Protein S19 forms a complex with S13 that binds strongly to the 16S ribosomal RNA. This is Small ribosomal subunit protein uS19 from Shouchella clausii (strain KSM-K16) (Alkalihalobacillus clausii).